The sequence spans 873 residues: Leucine--tRNA ligase (873 aa).

The short motif at 43 to 53 (PYPSGSLHMGH) is the 'HIGH' region element. The 'KMSKS' region signature appears at 624–628 (TMSKS). Position 627 (Lys-627) interacts with ATP.

It belongs to the class-I aminoacyl-tRNA synthetase family.

The protein resides in the cytoplasm. The enzyme catalyses tRNA(Leu) + L-leucine + ATP = L-leucyl-tRNA(Leu) + AMP + diphosphate. This chain is Leucine--tRNA ligase, found in Synechococcus sp. (strain JA-3-3Ab) (Cyanobacteria bacterium Yellowstone A-Prime).